A 272-amino-acid chain; its full sequence is Tryptophan synthase alpha chain (272 aa).

Catalysis depends on proton acceptor residues Glu-49 and Asp-60.

The protein belongs to the TrpA family. Tetramer of two alpha and two beta chains.

It catalyses the reaction (1S,2R)-1-C-(indol-3-yl)glycerol 3-phosphate + L-serine = D-glyceraldehyde 3-phosphate + L-tryptophan + H2O. The protein operates within amino-acid biosynthesis; L-tryptophan biosynthesis; L-tryptophan from chorismate: step 5/5. The alpha subunit is responsible for the aldol cleavage of indoleglycerol phosphate to indole and glyceraldehyde 3-phosphate. The polypeptide is Tryptophan synthase alpha chain (Polaromonas naphthalenivorans (strain CJ2)).